The chain runs to 474 residues: Cysteine--tRNA ligase (474 aa).

Cysteine 34 is a binding site for Zn(2+). Residues proline 36–asparagine 46 carry the 'HIGH' region motif. Cysteine 219, histidine 244, and glutamate 248 together coordinate Zn(2+). The short motif at lysine 276–serine 280 is the 'KMSKS' region element. Lysine 279 contributes to the ATP binding site.

Belongs to the class-I aminoacyl-tRNA synthetase family. Monomer. Requires Zn(2+) as cofactor.

It is found in the cytoplasm. It catalyses the reaction tRNA(Cys) + L-cysteine + ATP = L-cysteinyl-tRNA(Cys) + AMP + diphosphate. In Chlamydia pneumoniae (Chlamydophila pneumoniae), this protein is Cysteine--tRNA ligase (cysS).